Consider the following 482-residue polypeptide: MSAIDSQLPSSSGQDRPTDEVDRILSPGKLIILGLQHVLVMYAGAVAVPLMIGDRLGLSKEAIAMLISSDLFCCGIVTLLQCIGIGRFMGIRLPVIMSVTFAAVTPMIAIGMNPDIGLLGIFGATIAAGFITTLLAPLIGRLMPLFPPLVTGVVITSIGLSIIQVGIDWAAGGKGNPQYGNPVYLGISFAVLIFILLITRYAKGFMSNVAVLLGIVFGFLLSWMMNEVNLSGLHDASWFAIVTPMSFGMPIFDPVSILTMTAVLIIVFIESMGMFLALGEIVGRKLSSHDIIRGLRVDGVGTMIGGTFNSFPHTSFSQNVGLVSVTRVHSRWVCISSGIILILFGMVPKMAVLVASIPQFVLGGAGLVMFGMVLATGIRILSRCNYTTNRYNLYIVAISLGVGMTPTLSHDFFSKLPAVLQPLLHSGIMLATLSAVVLNVFFNGYQHHADLVKESVSDKDLKVRTVRMWLLMRKLKKNEHGE.

Over 1–29 (MSAIDSQLPSSSGQDRPTDEVDRILSPGK) the chain is Cytoplasmic. The chain crosses the membrane as a helical span at residues 30–50 (LIILGLQHVLVMYAGAVAVPL). At 51 to 62 (MIGDRLGLSKEA) the chain is on the periplasmic side. A helical membrane pass occupies residues 63–83 (IAMLISSDLFCCGIVTLLQCI). Residues 84-92 (GIGRFMGIR) lie on the Cytoplasmic side of the membrane. The helical transmembrane segment at 93-113 (LPVIMSVTFAAVTPMIAIGMN) threads the bilayer. The Periplasmic segment spans residues 114 to 115 (PD). The helical transmembrane segment at 116–136 (IGLLGIFGATIAAGFITTLLA) threads the bilayer. Residues 137-142 (PLIGRL) lie on the Cytoplasmic side of the membrane. Residues 143–163 (MPLFPPLVTGVVITSIGLSII) form a helical membrane-spanning segment. Topologically, residues 164–178 (QVGIDWAAGGKGNPQ) are periplasmic. The helical transmembrane segment at 179–199 (YGNPVYLGISFAVLIFILLIT) threads the bilayer. The Cytoplasmic portion of the chain corresponds to 200 to 204 (RYAKG). The chain crosses the membrane as a helical span at residues 205 to 225 (FMSNVAVLLGIVFGFLLSWMM). The Periplasmic portion of the chain corresponds to 226 to 261 (NEVNLSGLHDASWFAIVTPMSFGMPIFDPVSILTMT). The chain crosses the membrane as a helical span at residues 262–282 (AVLIIVFIESMGMFLALGEIV). The Cytoplasmic segment spans residues 283–337 (GRKLSSHDIIRGLRVDGVGTMIGGTFNSFPHTSFSQNVGLVSVTRVHSRWVCISS). Residues 338–358 (GIILILFGMVPKMAVLVASIP) form a helical membrane-spanning segment. Position 359 (glutamine 359) is a topological domain, periplasmic. Residues 360–380 (FVLGGAGLVMFGMVLATGIRI) traverse the membrane as a helical segment. At 381 to 392 (LSRCNYTTNRYN) the chain is on the cytoplasmic side. A helical transmembrane segment spans residues 393–413 (LYIVAISLGVGMTPTLSHDFF). At 414-421 (SKLPAVLQ) the chain is on the periplasmic side. A helical membrane pass occupies residues 422-442 (PLLHSGIMLATLSAVVLNVFF). Residues 443 to 482 (NGYQHHADLVKESVSDKDLKVRTVRMWLLMRKLKKNEHGE) are Cytoplasmic-facing.

Belongs to the nucleobase:cation symporter-2 (NCS2) (TC 2.A.40) family.

Its subcellular location is the cell inner membrane. Inhibited in the presence of the protonophore carbonyl cyanide m-chlorophenyl hydrazone. In terms of biological role, proton-dependent high-capacity transporter for uric acid. Also shows a low capacity for transport of xanthine at 37 degrees Celsius but not at 25 degrees Celsius. The sequence is that of Uric acid transporter UacT (uacT) from Escherichia coli (strain K12).